Consider the following 120-residue polypeptide: MITKVDRNAVRKKRHARIRKKIFGTAERPRLSVFRSNKHIYAQIIDDVKSATIVSASTLDKEFSLDSTNNIDAAKKVGELVAKRALEKGIKQVVFDRGGYLYHGRVKALADAAREAGLEF.

It belongs to the universal ribosomal protein uL18 family. Part of the 50S ribosomal subunit; part of the 5S rRNA/L5/L18/L25 subcomplex. Contacts the 5S and 23S rRNAs.

Functionally, this is one of the proteins that bind and probably mediate the attachment of the 5S RNA into the large ribosomal subunit, where it forms part of the central protuberance. This is Large ribosomal subunit protein uL18 from Geobacillus thermodenitrificans (strain NG80-2).